The sequence spans 434 residues: Histidinol dehydrogenase (434 aa).

NAD(+)-binding residues include Tyr-130, Gln-188, and Asn-211. 3 residues coordinate substrate: Ser-237, Gln-259, and His-262. Zn(2+) contacts are provided by Gln-259 and His-262. Catalysis depends on proton acceptor residues Glu-326 and His-327. Substrate-binding residues include His-327, Asp-360, Glu-414, and His-419. Zn(2+) is bound at residue Asp-360. Residue His-419 participates in Zn(2+) binding.

It belongs to the histidinol dehydrogenase family. In terms of assembly, homodimer. Requires Zn(2+) as cofactor.

It carries out the reaction L-histidinol + 2 NAD(+) + H2O = L-histidine + 2 NADH + 3 H(+). It participates in amino-acid biosynthesis; L-histidine biosynthesis; L-histidine from 5-phospho-alpha-D-ribose 1-diphosphate: step 9/9. In terms of biological role, catalyzes the sequential NAD-dependent oxidations of L-histidinol to L-histidinaldehyde and then to L-histidine. The protein is Histidinol dehydrogenase of Salmonella typhi.